Consider the following 226-residue polypeptide: ATP-dependent Clp protease proteolytic subunit 4 (226 aa).

Serine 122 serves as the catalytic Nucleophile. Residue histidine 147 is part of the active site.

Belongs to the peptidase S14 family. In terms of assembly, fourteen ClpP subunits assemble into 2 heptameric rings which stack back to back to give a disk-like structure with a central cavity, resembling the structure of eukaryotic proteasomes.

It localises to the cytoplasm. It catalyses the reaction Hydrolysis of proteins to small peptides in the presence of ATP and magnesium. alpha-casein is the usual test substrate. In the absence of ATP, only oligopeptides shorter than five residues are hydrolyzed (such as succinyl-Leu-Tyr-|-NHMec, and Leu-Tyr-Leu-|-Tyr-Trp, in which cleavage of the -Tyr-|-Leu- and -Tyr-|-Trp bonds also occurs).. In terms of biological role, cleaves peptides in various proteins in a process that requires ATP hydrolysis. Has a chymotrypsin-like activity. Plays a major role in the degradation of misfolded proteins. In Streptomyces avermitilis (strain ATCC 31267 / DSM 46492 / JCM 5070 / NBRC 14893 / NCIMB 12804 / NRRL 8165 / MA-4680), this protein is ATP-dependent Clp protease proteolytic subunit 4.